Here is an 85-residue protein sequence, read N- to C-terminus: Large ribosomal subunit protein bL27 (85 aa).

A disordered region spans residues 1-22 (MAHKKGQGSSRNGRDSPGQHRG).

This sequence belongs to the bacterial ribosomal protein bL27 family.

This Anaeromyxobacter sp. (strain Fw109-5) protein is Large ribosomal subunit protein bL27.